The chain runs to 175 residues: Peptide deformylase 1 (175 aa).

Fe cation contacts are provided by C99 and H141. The active site involves E142. H145 serves as a coordination point for Fe cation.

The protein belongs to the polypeptide deformylase family. Fe(2+) serves as cofactor.

The enzyme catalyses N-terminal N-formyl-L-methionyl-[peptide] + H2O = N-terminal L-methionyl-[peptide] + formate. Functionally, removes the formyl group from the N-terminal Met of newly synthesized proteins. Requires at least a dipeptide for an efficient rate of reaction. N-terminal L-methionine is a prerequisite for activity but the enzyme has broad specificity at other positions. This chain is Peptide deformylase 1, found in Rickettsia conorii (strain ATCC VR-613 / Malish 7).